The sequence spans 278 residues: Formamidopyrimidine-DNA glycosylase (278 aa).

The active-site Schiff-base intermediate with DNA is P2. Catalysis depends on E3, which acts as the Proton donor. K60 acts as the Proton donor; for beta-elimination activity in catalysis. Residues H95 and R114 each coordinate DNA. Residues 244-278 (WVYRRGGEPCRRCGTIIRRDKLSGRSTHWCPTCQG) form an FPG-type zinc finger. Catalysis depends on R268, which acts as the Proton donor; for delta-elimination activity.

The protein belongs to the FPG family. As to quaternary structure, monomer. Zn(2+) serves as cofactor.

The catalysed reaction is Hydrolysis of DNA containing ring-opened 7-methylguanine residues, releasing 2,6-diamino-4-hydroxy-5-(N-methyl)formamidopyrimidine.. It catalyses the reaction 2'-deoxyribonucleotide-(2'-deoxyribose 5'-phosphate)-2'-deoxyribonucleotide-DNA = a 3'-end 2'-deoxyribonucleotide-(2,3-dehydro-2,3-deoxyribose 5'-phosphate)-DNA + a 5'-end 5'-phospho-2'-deoxyribonucleoside-DNA + H(+). Functionally, involved in base excision repair of DNA damaged by oxidation or by mutagenic agents. Acts as a DNA glycosylase that recognizes and removes damaged bases. Has a preference for oxidized purines, such as 7,8-dihydro-8-oxoguanine (8-oxoG). Has AP (apurinic/apyrimidinic) lyase activity and introduces nicks in the DNA strand. Cleaves the DNA backbone by beta-delta elimination to generate a single-strand break at the site of the removed base with both 3'- and 5'-phosphates. The protein is Formamidopyrimidine-DNA glycosylase of Parasynechococcus marenigrum (strain WH8102).